Consider the following 407-residue polypeptide: Keratin, type I cuticular Ha2 (407 aa).

Residues 1 to 55 form a head region; the sequence is MPSVCMPTTYRPASCLSKTYLSSSCQPSNRRPTGCISSSMGTYGLFCEGAFNGNE. In terms of domain architecture, IF rod spans 55–366; sequence EKETMQVLND…GLLESEDSKL (312 aa). Residues 56-90 are coil 1A; it reads KETMQVLNDRLANYLEKVRQLEKENAELEGKIQDV. A linker 1 region spans residues 91–101; that stretch reads YQGQVLTMCPD. A coil 1B region spans residues 102-202; it reads YQSYFQTIEE…HEEEVGVLRQ (101 aa). Residues 203–218 are linker 12; that stretch reads QLGDRLNIEVDAAPPV. A coil 2 region spans residues 219–362; that stretch reads DLTRMLEEMR…DTYRGLLESE (144 aa). A tail region spans residues 363 to 407; sequence DSKLPCNPCSTPSCQPCAPSPGVSRTVCVPHTVCVPCSPCLQTRY.

The protein belongs to the intermediate filament family. Cuticle of the hair shaft.

This Mus musculus (Mouse) protein is Keratin, type I cuticular Ha2 (Krt32).